The chain runs to 479 residues: Small ribosomal subunit protein bS1 (479 aa).

S1 motif domains follow at residues 36–105 (GDIV…LSKK), 123–188 (DEAV…LSRR), 209–277 (GAIR…LSLK), and 294–363 (GQIV…LSLK). The segment at 429-466 (TAQMEKFAAAEAEAANAPVSNGSSRSEESSGGTLASDA) is disordered. Over residues 437–460 (AAEAEAANAPVSNGSSRSEESSGG) the composition is skewed to low complexity.

Belongs to the bacterial ribosomal protein bS1 family. In terms of assembly, binds uncharacterized protein MSMEG_2731/MSMEI_2664.

Its function is as follows. Binds mRNA, facilitating recognition of most mRNAs by the 30S ribosomal subunit during translation initiation. Plays a role in trans-translation; binds tmRNA (the product of the ssrA gene). Binds very poorly to pyrazinoic acid (POA), the active form of the prodrug pyrazinamide (PZA); POA does not disrupt trans-translation in this organism. M.smegmatis is resistant to the antibiotic PZA. In trans-translation Ala-aminoacylated transfer-messenger RNA (tmRNA, product of the ssrA gene; the 2 termini fold to resemble tRNA(Ala) while it encodes a short internal open reading frame (the tag peptide)) acts like a tRNA, entering the A-site of the ribosome and displacing the stalled mRNA (which is subsequently degraded). The ribosome then switches to translate the ORF on the tmRNA, the nascent peptide is terminated with the 'tag peptide' encoded by the tmRNA and thus targeted for degradation. The protein is Small ribosomal subunit protein bS1 (rpsA) of Mycolicibacterium smegmatis (strain ATCC 700084 / mc(2)155) (Mycobacterium smegmatis).